Consider the following 860-residue polypeptide: Alanine--tRNA ligase (860 aa).

Positions 563, 567, 665, and 669 each coordinate Zn(2+).

Belongs to the class-II aminoacyl-tRNA synthetase family. The cofactor is Zn(2+).

Its subcellular location is the cytoplasm. The catalysed reaction is tRNA(Ala) + L-alanine + ATP = L-alanyl-tRNA(Ala) + AMP + diphosphate. In terms of biological role, catalyzes the attachment of alanine to tRNA(Ala) in a two-step reaction: alanine is first activated by ATP to form Ala-AMP and then transferred to the acceptor end of tRNA(Ala). Also edits incorrectly charged Ser-tRNA(Ala) and Gly-tRNA(Ala) via its editing domain. This Vibrio parahaemolyticus serotype O3:K6 (strain RIMD 2210633) protein is Alanine--tRNA ligase.